The chain runs to 153 residues: Regulatory protein RecX (153 aa).

It belongs to the RecX family.

It is found in the cytoplasm. In terms of biological role, modulates RecA activity. This is Regulatory protein RecX from Neisseria gonorrhoeae (strain ATCC 700825 / FA 1090).